A 516-amino-acid polypeptide reads, in one-letter code: MKKKNIYSIRKLGVGIASVTLGTLLISGGVTPAANAAQHDEAQQNAFYQVLNMPNLNADQRNGFIQSLKDDPSQSANVLGEAQKLNDSQAPKADAQQNNFNKDQQSAFYEILNMPNLNEAQRNGFIQSLKDDPSQSTNVLGEAKKLNESQAPKADNNFNKEQQNAFYEILNMPNLNEEQRNGFIQSLKDDPSQSANLLSEAKKLNESQAPKADNKFNKEQQNAFYEILHLPNLNEEQRNGFIQSLKDDPSQSANLLAEAKKLNDAQAPKADNKFNKEQQNAFYEILHLPNLTEEQRNGFIQSLKDDPSVSKEILAEAKKLNDAQAPKEEDNNKPGKEDNNKPGKEDNNKPGKEDNNKPGKEDNNKPGKEDGNKPGKEDNKKPGKEDGNKPGKEDNKKPGKEDGNKPGKEDGNKPGKEDGNGVHVVKPGDTVNDIAKANGTTADKIAADNKLADKNMIKPGQELVVDKKQPANHADANKAQALPETGEENPFIGTTVFGGLSLALGAALLAGRRREL.

A signal peptide spans Met1–Ala36. The YSIRK-G/S signaling motif signature appears at Tyr7 to Ser18. Residues Ala37–Lys92 form an Immunoglobulin-binding region E repeat. An Immunoglobulin-binding region D repeat occupies Ala93–Lys153. Residues Ala154–Lys211 form an Immunoglobulin-binding region A repeat. The Immunoglobulin-binding region B repeat unit spans residues Ala212–Lys269. The stretch at Ala270–Lys327 is one Immunoglobulin-binding region C repeat. Basic and acidic residues predominate over residues Lys318–Asn420. Disordered stretches follow at residues Lys318–Thr440 and Lys467–Glu487. 11 tandem repeats follow at residues Lys333–Asn340, Lys341–Asn348, Lys349–Asn356, Lys357–Asn364, Lys365–Asn372, Lys373–Lys380, Lys381–Asn388, Lys389–Lys396, Lys397–Asn404, Lys405–Asn412, and Lys413–Asn420. The interval Lys333 to Asn420 is 11 X 8 AA approximate tandem repeats. In terms of domain architecture, LysM spans Gly421–Val465. Positions Leu482 to Gly486 match the LPXTG sorting signal motif. Position 485 is a pentaglycyl murein peptidoglycan amidated threonine (Thr485). Residues Gly486–Leu516 constitute a propeptide, removed by sortase A.

Belongs to the immunoglobulin-binding protein SpA family. In terms of assembly, interacts with host TNFRSF1A; this interaction leads to the stimulation of both surface expression and shedding of TNFRSF1A.

The protein localises to the secreted. It is found in the cell wall. In terms of biological role, plays a role in the inhibition of the host innate and adaptive immune responses. Possesses five immunoglobulin-binding domains that capture both the fragment crystallizable region (Fc region) and the Fab region (part of Ig that identifies antigen) of immunoglobulins. In turn, Staphylococcus aureus is protected from phagocytic killing via inhibition of Ig Fc region. In addition, the host elicited B-cell response is prevented due to a decrease of antibody-secreting cell proliferation that enter the bone marrow, thereby decreasing long-term antibody production. Inhibits osteogenesis by preventing osteoblast proliferation and expression of alkaline phosphatase, type I collagen, osteopontin and osteocalcin. Acts directly as a pro-inflammatory factor in the lung through its ability to bind and activate tumor necrosis factor alpha receptor 1/TNFRSF1A. The protein is Immunoglobulin G-binding protein A (spa) of Staphylococcus aureus (strain NCTC 8325 / PS 47).